The sequence spans 92 residues: Small ribosomal subunit protein uS19 (92 aa).

It belongs to the universal ribosomal protein uS19 family.

Protein S19 forms a complex with S13 that binds strongly to the 16S ribosomal RNA. The polypeptide is Small ribosomal subunit protein uS19 (Methylobacterium radiotolerans (strain ATCC 27329 / DSM 1819 / JCM 2831 / NBRC 15690 / NCIMB 10815 / 0-1)).